Consider the following 262-residue polypeptide: Acyl-[acyl-carrier-protein]--UDP-N-acetylglucosamine O-acyltransferase (262 aa).

It belongs to the transferase hexapeptide repeat family. LpxA subfamily. As to quaternary structure, homotrimer.

It localises to the cytoplasm. The enzyme catalyses a (3R)-hydroxyacyl-[ACP] + UDP-N-acetyl-alpha-D-glucosamine = a UDP-3-O-[(3R)-3-hydroxyacyl]-N-acetyl-alpha-D-glucosamine + holo-[ACP]. The protein operates within glycolipid biosynthesis; lipid IV(A) biosynthesis; lipid IV(A) from (3R)-3-hydroxytetradecanoyl-[acyl-carrier-protein] and UDP-N-acetyl-alpha-D-glucosamine: step 1/6. Involved in the biosynthesis of lipid A, a phosphorylated glycolipid that anchors the lipopolysaccharide to the outer membrane of the cell. The polypeptide is Acyl-[acyl-carrier-protein]--UDP-N-acetylglucosamine O-acyltransferase (Verminephrobacter eiseniae (strain EF01-2)).